The following is a 377-amino-acid chain: Nitric oxide reductase FlRd-NAD(+) reductase (377 aa).

It belongs to the FAD-dependent oxidoreductase family. The cofactor is FAD.

The protein localises to the cytoplasm. It carries out the reaction 2 reduced [nitric oxide reductase rubredoxin domain] + NAD(+) + H(+) = 2 oxidized [nitric oxide reductase rubredoxin domain] + NADH. The protein operates within nitrogen metabolism; nitric oxide reduction. Functionally, one of at least two accessory proteins for anaerobic nitric oxide (NO) reductase. Reduces the rubredoxin moiety of NO reductase. The polypeptide is Nitric oxide reductase FlRd-NAD(+) reductase (Escherichia coli O7:K1 (strain IAI39 / ExPEC)).